We begin with the raw amino-acid sequence, 567 residues long: MPSEKATTRHLPGAVETLSPRTGRRPETPAYGSWLLGRVSESPRMRRVRIQGMLTVAILVTNVIGLIVGAMLLTVAFPKPSVILDAPHWVSFGIVPGYCVLAFILGTYWLTRQTARALRWAIEERTPSHDEARSAFLVPLRVALAVLFLWGAAAALWTIIYGLANRLFIPRFLFSMGVIGVVAATSCYLLTEFALRPMAAQALEVGATPRSLVRGIVGRTMLVWLLCSGVPNVGVALTAIFDDTFWELSNDQFMITVLILWAPLLIFGFILMWILAWLTATPVRVVREALNRVEQGDLSGDLVVFDGTELGELQRGFNRMVEGLRERERVRDLFGRHVGREVAAAAERERPKLGGEERHVAVVFVDIVGSTQLVTSRPAAEVVMLLNRFFTVIVDEVNHHRGLVNKFQGDASLAVFGAPNRLSHPEDAALATARAIADRLASEMPECQAGIGVAAGQVVAGNVGAHERFEYTVIGEPVNEAARLCELAKSYPSRLLASSQTLRGASENECARWSLGETVTLRGHDQPIRLTSPVQQLQMPAQSADIVGGALGDHQTHTIYRGAHPTD.

The disordered stretch occupies residues 1–26; that stretch reads MPSEKATTRHLPGAVETLSPRTGRRP. 6 helical membrane passes run 57–77, 90–110, 142–162, 173–193, 221–241, and 257–277; these read AILV…TVAF, VSFG…TYWL, VALA…IIYG, LFSM…LTEF, MLVW…TAIF, and VLIL…ILAW. Residues 278–329 enclose the HAMP domain; that stretch reads LTATPVRVVREALNRVEQGDLSGDLVVFDGTELGELQRGFNRMVEGLRERER. The Guanylate cyclase domain maps to 361–485; that stretch reads AVVFVDIVGS…EPVNEAARLC (125 aa).

The protein belongs to the adenylyl cyclase class-3 family.

The protein localises to the cell membrane. This is an uncharacterized protein from Mycobacterium tuberculosis (strain ATCC 25618 / H37Rv).